Reading from the N-terminus, the 201-residue chain is Probable cytokinin riboside 5'-monophosphate phosphoribohydrolase LOG6 (201 aa).

Residues E89, 107 to 108 (RK), 124 to 130 (GYGTLEE), and T136 contribute to the substrate site.

Belongs to the LOG family.

The catalysed reaction is N(6)-(dimethylallyl)adenosine 5'-phosphate + H2O = N(6)-dimethylallyladenine + D-ribose 5-phosphate. It catalyses the reaction 9-ribosyl-trans-zeatin 5'-phosphate + H2O = trans-zeatin + D-ribose 5-phosphate. Its function is as follows. Cytokinin-activating enzyme working in the direct activation pathway. Phosphoribohydrolase that converts inactive cytokinin nucleotides to the biologically active free-base forms. The polypeptide is Probable cytokinin riboside 5'-monophosphate phosphoribohydrolase LOG6 (LOG6) (Arabidopsis thaliana (Mouse-ear cress)).